The primary structure comprises 249 residues: 5'-nucleotidase SurE (249 aa).

Positions 9, 10, 40, and 92 each coordinate a divalent metal cation.

It belongs to the SurE nucleotidase family. A divalent metal cation serves as cofactor.

The protein localises to the cytoplasm. The catalysed reaction is a ribonucleoside 5'-phosphate + H2O = a ribonucleoside + phosphate. Nucleotidase that shows phosphatase activity on nucleoside 5'-monophosphates. The protein is 5'-nucleotidase SurE of Shewanella baltica (strain OS195).